Consider the following 91-residue polypeptide: UPF0250 protein HCH_05838 (91 aa).

The protein belongs to the UPF0250 family.

The chain is UPF0250 protein HCH_05838 from Hahella chejuensis (strain KCTC 2396).